The chain runs to 534 residues: UDP-glucuronosyltransferase 1A4 (534 aa).

An N-terminal signal peptide occupies residues 1–28 (MARGLQVPLPRLATGLLLLLSVQPWAES). 4 N-linked (GlcNAc...) asparagine glycosylation sites follow: N119, N142, N296, and N348. A helical transmembrane segment spans residues 492–508 (VIGFLLAVVLTVAFITF).

This sequence belongs to the UDP-glycosyltransferase family. In terms of assembly, homodimer. Homooligomer. Interacts with UGT1A1, UGT1A3, UGT1A6, UGT1A7, UGT1A8, UGT1A9 and UGT1A10 to form heterodimers. Isoform 1 interacts with isoform 2/i2 suggesting that oligomerization is involved in negative regulation of transferase activity by isoform 2. Isoform 1 also interacts with respective i2 isoforms of UGT1A1, UGT1A3, UGT1A6, UGT1A7, UGT1A8, UGT1A9 and UGT1A10. In terms of tissue distribution, expressed in liver. Expressed in kidney, colon and small intestine. Not expressed in esophagus. Not expressed in skin. Expressed in liver, kidney, colon, esophagus and small intestine.

It is found in the endoplasmic reticulum membrane. The catalysed reaction is glucuronate acceptor + UDP-alpha-D-glucuronate = acceptor beta-D-glucuronoside + UDP + H(+). It catalyses the reaction calcidiol + UDP-alpha-D-glucuronate = calcidiol 25-O-(beta-D-glucuronide) + UDP + H(+). It carries out the reaction calcidiol + UDP-alpha-D-glucuronate = calcidiol 3-O-(beta-D-glucuronide) + UDP + H(+). The enzyme catalyses calcitriol + UDP-alpha-D-glucuronate = calcitriol 25-O-(beta-D-glucuronide) + UDP + H(+). The catalysed reaction is (5Z,8Z,11Z,14Z)-eicosatetraenoate + UDP-alpha-D-glucuronate = O-[(5Z),(8Z),(11Z),(14Z)-eicosatetraenoyl]-beta-D-glucuronate + UDP. It catalyses the reaction 15-hydroxy-(5Z,8Z,11Z,13E)-eicosatetraenoate + UDP-alpha-D-glucuronate = 15-O-(beta-D-glucuronosyl)-(5Z,8Z,11Z,14Z)-eicosatetraenoate + UDP + H(+). It carries out the reaction 20-hydroxy-(5Z,8Z,11Z,14Z)-eicosatetraenoate + UDP-alpha-D-glucuronate = 20-O-(beta-D-glucuronosyl)-(5Z,8Z,11Z,14Z)-eicosatetraenoate + UDP + H(+). Its function is as follows. UDP-glucuronosyltransferase (UGT) that catalyzes phase II biotransformation reactions in which lipophilic substrates are conjugated with glucuronic acid to increase the metabolite's water solubility, thereby facilitating excretion into either the urine or bile. Essential for the elimination and detoxification of drugs, xenobiotics and endogenous compounds. Involved in the glucuronidation of calcidiol, which is the major circulating form of vitamin D3 essential for the regulation of calcium and phosphate homeostasis. Also glucuronidates the biologically active form of vitamin D3, calcitriol, probably leading to its biliary transport and intestinal reabsorption. Involved in the glucuronidation of arachidonic acid (AA) and AA-derived eicosanoids including 15-HETE, 20-HETE and PGB1. Functionally, lacks UDP-glucuronosyltransferase (UGT) activity but acts as a negative regulator of isoform 1. This is UDP-glucuronosyltransferase 1A4 from Homo sapiens (Human).